The following is a 144-amino-acid chain: D-aminoacyl-tRNA deacylase (144 aa).

Positions 137–138 match the Gly-cisPro motif, important for rejection of L-amino acids motif; sequence GP.

The protein belongs to the DTD family. As to quaternary structure, homodimer.

It localises to the cytoplasm. It carries out the reaction glycyl-tRNA(Ala) + H2O = tRNA(Ala) + glycine + H(+). The catalysed reaction is a D-aminoacyl-tRNA + H2O = a tRNA + a D-alpha-amino acid + H(+). Its function is as follows. An aminoacyl-tRNA editing enzyme that deacylates mischarged D-aminoacyl-tRNAs. Also deacylates mischarged glycyl-tRNA(Ala), protecting cells against glycine mischarging by AlaRS. Acts via tRNA-based rather than protein-based catalysis; rejects L-amino acids rather than detecting D-amino acids in the active site. By recycling D-aminoacyl-tRNA to D-amino acids and free tRNA molecules, this enzyme counteracts the toxicity associated with the formation of D-aminoacyl-tRNA entities in vivo and helps enforce protein L-homochirality. The protein is D-aminoacyl-tRNA deacylase of Acinetobacter baumannii (strain SDF).